The sequence spans 86 residues: Large ribosomal subunit protein bL31 (86 aa).

Residues 66–86 are disordered; that stretch reads GMGSANSATSKEQKADKDSQK. Residues 76–86 show a composition bias toward basic and acidic residues; that stretch reads KEQKADKDSQK.

It belongs to the bacterial ribosomal protein bL31 family. Type A subfamily. Part of the 50S ribosomal subunit.

Its function is as follows. Binds the 23S rRNA. In Prochlorococcus marinus (strain MIT 9215), this protein is Large ribosomal subunit protein bL31.